A 918-amino-acid polypeptide reads, in one-letter code: Calcium-transporting ATPase type 2C member 1 (918 aa).

Residues 1 to 75 (MKVARFQKIP…SEDEPLWKKY (75 aa)) are Cytoplasmic-facing. Residues 76 to 96 (ISQFKNPLIMLLLASAVISVL) traverse the membrane as a helical segment. The Extracellular segment spans residues 97 to 98 (MH). The chain crosses the membrane as a helical span at residues 99 to 119 (QFDDAVSITVAILIVVTVAFV). The Cytoplasmic portion of the chain corresponds to 120–267 (QEYRSEKSLE…LQKSMDLLGK (148 aa)). A helical membrane pass occupies residues 268-288 (QLSFYSFGIIGIIMLVGWLLG). Topologically, residues 289 to 302 (KDILEMFTISVSLA) are extracellular. A helical transmembrane segment spans residues 303-323 (VAAIPEGLPIVVTVTLALGVM). Residues 324–703 (RMVKKRAIVK…IYNNIKNFVR (380 aa)) are Cytoplasmic-facing. D350 functions as the 4-aspartylphosphate intermediate in the catalytic mechanism. D643 and D647 together coordinate Mg(2+). A helical membrane pass occupies residues 704 to 724 (FQLSTSIAALTLISLATLMNF). The Extracellular segment spans residues 725-732 (PNPLNAMQ). A helical transmembrane segment spans residues 733 to 753 (ILWINIIMDGPPAQSLGVEPV). The Cytoplasmic portion of the chain corresponds to 754 to 773 (DKDVIRKPPRNWKDSILTKN). A helical membrane pass occupies residues 774–794 (LILKILVSSIIIVCGTLFVFW). Residues 795–842 (RELRDNVITPRDTTMTFTCFVFFDMFNALSSRSQTKSVFEIGLCSNKM) lie on the Extracellular side of the membrane. A helical membrane pass occupies residues 843 to 863 (FCYAVLGSIMGQLLVIYFPPL). Topologically, residues 864-873 (QKVFQTESLS) are cytoplasmic. The helical transmembrane segment at 874–894 (ILDLLFLLGLTSSVCIVAEII) threads the bilayer. Topologically, residues 895–918 (KKVERSREKIQKHVSSTSSSFLEV) are extracellular.

This sequence belongs to the cation transport ATPase (P-type) (TC 3.A.3) family. Type IIA subfamily. As to quaternary structure, monomer. Homodimer.

It is found in the golgi apparatus. The protein resides in the trans-Golgi network membrane. Its subcellular location is the golgi stack membrane. It carries out the reaction Ca(2+)(in) + ATP + H2O = Ca(2+)(out) + ADP + phosphate + H(+). The catalysed reaction is Mn(2+)(in) + ATP + H2O = Mn(2+)(out) + ADP + phosphate + H(+). Functionally, ATP-driven pump that supplies the Golgi apparatus with Ca(2+) and Mn(2+) ions, both essential cofactors for processing and trafficking of newly synthesized proteins in the secretory pathway. Within a catalytic cycle, acquires Ca(2+) or Mn(2+) ions on the cytoplasmic side of the membrane and delivers them to the lumenal side. The transfer of ions across the membrane is coupled to ATP hydrolysis and is associated with a transient phosphorylation that shifts the pump conformation from inward-facing to outward-facing state. Plays a primary role in the maintenance of Ca(2+) homeostasis in the trans-Golgi compartment with a functional impact on Golgi and post-Golgi protein sorting as well as a structural impact on cisternae morphology. Responsible for loading the Golgi stores with Ca(2+) ions in keratinocytes, contributing to keratinocyte differentiation and epidermis integrity. Participates in Ca(2+) and Mn(2+) ions uptake into the Golgi store of hippocampal neurons and regulates protein trafficking required for neural polarity. May also play a role in the maintenance of Ca(2+) and Mn(2+) homeostasis and signaling in the cytosol while preventing cytotoxicity. The protein is Calcium-transporting ATPase type 2C member 1 (ATP2C1) of Pongo abelii (Sumatran orangutan).